A 140-amino-acid chain; its full sequence is MLLLVAPEQEPVQSTAPLFTERCPAGFPSPAADYTEEELDLNAYCIRRPAATFFVRAIGDSMKEMGLHSGDLMVVDKAEKPMQGDIVIAETDGEFTVKRLQLKPRIALLPINPAYPTLYPEELQIFGVVTAFIHKTRSTD.

Active-site for autocatalytic cleavage activity residues include Ser-61 and Lys-98.

Belongs to the peptidase S24 family.

Involved in UV protection and mutation. The sequence is that of Protein SamA (samA) from Salmonella typhimurium (strain LT2 / SGSC1412 / ATCC 700720).